Reading from the N-terminus, the 385-residue chain is MRIILLLFLIVFVVAQSSSSSSSSGCPCDSSYLCEPLQIAPRQEFLGFSLNSTQYPNYYWNQLTTLAIFYETIEDELLCIAHENDVRLVWGTTFPIENLGNSSYIEEWIQEQIEKVQSTFTDGLNFDVESPITDPTIAQQYTELVSATNKAFKAINPFYQISIDVAWSPSCIDKRCYDYAGLASNSDFLVAMDYDERSQVFGEKVCTAGANSSPSNALAGINNFTDLGISTDQLVMGLPWYGYIYKNCLNGDEAGLETVVCQIESVPFRGANCSDAAGSEYDYSYLVQLLQDQTINSSAVQWNTEWQSPYFNYIDPITGNVDQVWFDNPQSLSIKVQLAQKLNLRGVAVWNIDFLDFSDQYNSRPMWDALASFFPQSASSEQSLN.

Positions Met-1–Ala-15 are cleaved as a signal peptide. The GH18 domain maps to Gln-16–Ser-377. N-linked (GlcNAc...) asparagine glycosylation is found at Asn-51 and Asn-101. The active-site Proton donor is the Glu-129. N-linked (GlcNAc...) asparagine glycosylation is found at Asn-223, Asn-272, and Asn-296.

It belongs to the glycosyl hydrolase 18 family.

The protein localises to the lysosome. Its function is as follows. Involved in the degradation of asparagine-linked glycoproteins. May hydrolyze of N-acetyl-beta-D-glucosamine (1-4)N-acetylglucosamine chitobiose core from the reducing end of the bond. This Dictyostelium discoideum (Social amoeba) protein is Probable di-N-acetylchitobiase 2 (ctbs2).